The primary structure comprises 347 residues: 4-hydroxy-2-oxovalerate aldolase 1 (347 aa).

One can recognise a Pyruvate carboxyltransferase domain in the interval 13-265; that stretch reads IRVTDTSLRD…KTGIDFFAIA (253 aa). 21–22 contacts substrate; sequence RD. Asp-22 lines the Mn(2+) pocket. Residue His-25 is the Proton acceptor of the active site. 2 residues coordinate substrate: Ser-175 and His-204. Residues His-204 and His-206 each contribute to the Mn(2+) site. Tyr-295 contacts substrate.

It belongs to the 4-hydroxy-2-oxovalerate aldolase family.

The enzyme catalyses (S)-4-hydroxy-2-oxopentanoate = acetaldehyde + pyruvate. In Rhodococcus erythropolis (strain PR4 / NBRC 100887), this protein is 4-hydroxy-2-oxovalerate aldolase 1.